The following is a 654-amino-acid chain: Hemagglutinin-esterase-fusion glycoprotein (654 aa).

Positions 1-14 (MFFSLLLMLGLTEA) are cleaved as a signal peptide. The tract at residues 15 to 40 (EKIKICLQKQVNSSFSLHNGFGGNLY) is fusion domain-1. The Extracellular segment spans residues 15–629 (EKIKICLQKQ…QSDPFYWGSS (615 aa)). 4 cysteine pairs are disulfide-bonded: cysteine 20-cysteine 582, cysteine 209-cysteine 251, cysteine 228-cysteine 315, and cysteine 236-cysteine 288. Asparagine 26 and asparagine 61 each carry an N-linked (GlcNAc...) asparagine; by host glycan. The tract at residues 41-157 (ATEEKRMFEL…KLNFQKSIYE (117 aa)) is esterase domain-1. Serine 71 acts as the Nucleophile in catalysis. 2 N-linked (GlcNAc...) asparagine; by host glycosylation sites follow: asparagine 143 and asparagine 188. The tract at residues 157 to 309 (ELASQSHCMS…VRSSPRFLLM (153 aa)) is N-acetyl-9-O-acetylneuraminic acid binding. The tract at residues 309–363 (MPERSYCFDMKEKGPVTAVQSIWGKGRKSDYAVDQACLSTPGCMLIQKQKPYIGE) is esterase domain-2. Residues 364-654 (ADDHHGDQEM…ISGIAICRTK (291 aa)) form a fusion domain-2 region. Catalysis depends on charge relay system residues aspartate 365 and histidine 368. 3 N-linked (GlcNAc...) asparagine; by host glycosylation sites follow: asparagine 394, asparagine 551, and asparagine 602. The helical transmembrane segment at 630–650 (LGLAITAANLMAALVISGIAI) threads the bilayer. At 651-654 (CRTK) the chain is on the cytoplasmic side.

It belongs to the influenza viruses hemagglutinin family. Homotrimer of disulfide-linked HEF1-HEF2. In natural infection, inactive HEF is matured into HEF1 and HEF2 outside the cell by one or more trypsin-like, arginine-specific endoprotease.

It localises to the virion membrane. Its subcellular location is the host cell membrane. It carries out the reaction N-acetyl-9-O-acetylneuraminate + H2O = N-acetylneuraminate + acetate + H(+). The catalysed reaction is N-acetyl-4-O-acetylneuraminate + H2O = N-acetylneuraminate + acetate + H(+). Functionally, binds to the N-acetyl-9-O-acetylneuraminic acid residues on the cell surface, bringing about the attachment of the virus particle to the cell. Plays a major role in the determination of host range restriction and virulence. Class I viral fusion protein. Responsible for penetration of the virus into the cell cytoplasm by mediating the fusion of the membrane of the endocytosed virus particle with the endosomal membrane. Low pH in endosomes induce an irreversible conformational change in HEF2, releasing the fusion hydrophobic peptide. Several trimers are required to form a competent fusion pore. Displays a receptor-destroying activity which is a neuraminidate-O-acetyl esterase. This activity cleaves off any receptor on the cell surface, which would otherwise prevent virions release. These cleavages prevent self-aggregation and ensure the efficient spread of the progeny virus from cell to cell. The sequence is that of Hemagglutinin-esterase-fusion glycoprotein from Influenza C virus (strain C/California/1978).